The chain runs to 359 residues: Hyaluronan and proteoglycan link protein 3 (359 aa).

An N-terminal signal peptide occupies residues 1-17 (MSLLFLVLLSPFPCVLG). The Ig-like V-type domain occupies 48 to 164 (KLVVETTEES…ESGLVELELR (117 aa)). Intrachain disulfides connect cysteine 70–cysteine 146, cysteine 188–cysteine 259, cysteine 212–cysteine 233, cysteine 286–cysteine 355, and cysteine 311–cysteine 332. Link domains are found at residues 166 to 261 (VVFP…FCFA) and 266 to 357 (GRVY…YCYV).

The protein belongs to the HAPLN family.

Its subcellular location is the secreted. It is found in the extracellular space. The protein localises to the extracellular matrix. Its function is as follows. May function in hyaluronic acid binding. The polypeptide is Hyaluronan and proteoglycan link protein 3 (Hapln3) (Mus musculus (Mouse)).